The primary structure comprises 400 residues: Transcription initiation factor IIF subunit beta (400 aa).

Over residues 1–19 (MSSGSAGAPALSNNSTNSV) the composition is skewed to polar residues. The disordered stretch occupies residues 1-47 (MSSGSAGAPALSNNSTNSVAKEKSGNISGDEYLSQEEEVFDGNDIEN). Phosphoserine is present on residues S28, S34, and S56. Acidic residues predominate over residues 33-47 (LSQEEEVFDGNDIEN). Disordered stretches follow at residues 165–194 (QERE…VMTD) and 366–400 (TLGE…EDVV). Positions 174-189 (KQQQQKRRNNRKKFNH) are enriched in basic residues. Over residues 386–400 (AEADLEDEIEMEDVV) the composition is skewed to acidic residues.

It belongs to the TFIIF beta subunit family. In terms of assembly, TFIIF is composed of three different subunits: TFG1/RAP74, TFG2/RAP30 and TAF14.

It is found in the nucleus. Its function is as follows. TFIIF is a general transcription initiation factor that binds to RNA polymerase II. Its functions include the recruitment of RNA polymerase II to the promoter bound DNA-TBP-TFIIB complex, decreasing the affinity of RNA polymerase II for non-specific DNA, allowing for the subsequent recruitment of TFIIE and TFIIH, and facilitating RNA polymerase II elongation. In Saccharomyces cerevisiae (strain ATCC 204508 / S288c) (Baker's yeast), this protein is Transcription initiation factor IIF subunit beta (TFG2).